A 352-amino-acid chain; its full sequence is Pyrimidine monooxygenase RutA (352 aa).

FMN contacts are provided by residues 49–50, Asn-115, Glu-124, 140–141, and Ser-189; these read IK and RY.

Belongs to the NtaA/SnaA/DszA monooxygenase family. RutA subfamily.

It carries out the reaction uracil + FMNH2 + NADH + O2 = (Z)-3-ureidoacrylate + FMN + NAD(+) + H2O + H(+). The enzyme catalyses thymine + FMNH2 + NADH + O2 = (Z)-2-methylureidoacrylate + FMN + NAD(+) + H2O + H(+). Its function is as follows. Catalyzes the pyrimidine ring opening between N-3 and C-4 by an unusual flavin hydroperoxide-catalyzed mechanism, adding oxygen atoms in the process to yield ureidoacrylate peracid, that immediately reacts with FMN forming ureidoacrylate and FMN-N(5)-oxide. The FMN-N(5)-oxide reacts spontaneously with NADH to produce FMN. Requires the flavin reductase RutF to regenerate FMN in vivo. In Caulobacter segnis (strain ATCC 21756 / DSM 7131 / JCM 7823 / NBRC 15250 / LMG 17158 / TK0059) (Mycoplana segnis), this protein is Pyrimidine monooxygenase RutA.